The chain runs to 57 residues: Phosphatase RapH inhibitor (57 aa).

2 consecutive propeptides follow at residues 1–34 and 41–57; these read MPIK…FKES and YIDH…KALS. Residues 26–57 form a disordered region; it reads TNSGGFKESTDRNTTYIDHSPYKLSDQKKALS.

This sequence belongs to the Phr family. Contains a predicted signal peptide cleavage site in the N-terminal region, however the propeptide is probably only subject to processing events at the ends of the mature peptide.

It localises to the secreted. It is found in the cytoplasm. Its function is as follows. Signaling molecule involved the regulation of both sporulation and competence. Secreted during production, but the mature peptide acts intracellularly, indicating that it needs to be imported into the cell to function. Acts by inhibiting RapH activity. Can inhibit both RapH activities, the dephosphorylation of Spo0F and the sequestration of ComA. The polypeptide is Phosphatase RapH inhibitor (phrH) (Bacillus subtilis (strain 168)).